A 379-amino-acid chain; its full sequence is Demethylspheroidene O-methyltransferase (379 aa).

Positions 235 and 279 each coordinate S-adenosyl-L-methionine.

It belongs to the class I-like SAM-binding methyltransferase superfamily. Cation-independent O-methyltransferase family.

It carries out the reaction demethylspheroidene + S-adenosyl-L-methionine = spheroidene + S-adenosyl-L-homocysteine + H(+). The protein operates within carotenoid biosynthesis; spheroidene biosynthesis. In terms of biological role, methyltransferase that mediates the O-methylation of 1-hydroxy carotenoids. Converts hydroxyneurosporene to methoxyneurosporene or demethylspheroidene to spheroidene. Also able to produce spirilloxanthin. In Cereibacter sphaeroides (strain ATCC 17023 / DSM 158 / JCM 6121 / CCUG 31486 / LMG 2827 / NBRC 12203 / NCIMB 8253 / ATH 2.4.1.) (Rhodobacter sphaeroides), this protein is Demethylspheroidene O-methyltransferase (crtF).